The primary structure comprises 185 residues: dCTP deaminase (185 aa).

Residues Lys-107 to Arg-112, Thr-131 to Glu-133, Gln-152, Tyr-166, and Gln-176 each bind dCTP. Glu-133 acts as the Proton donor/acceptor in catalysis.

It belongs to the dCTP deaminase family. In terms of assembly, homotrimer.

It carries out the reaction dCTP + H2O + H(+) = dUTP + NH4(+). Its pathway is pyrimidine metabolism; dUMP biosynthesis; dUMP from dCTP (dUTP route): step 1/2. Catalyzes the deamination of dCTP to dUTP. This Anaplasma phagocytophilum (strain HZ) protein is dCTP deaminase.